A 372-amino-acid chain; its full sequence is uncharacterized protein (372 aa).

The first 33 residues, 1 to 33 (MVRRALRLAAGTASLAAGTWLLRALHGTPAALG), serve as a signal peptide directing secretion.

To K.pneumoniae RomA.

This is an uncharacterized protein from Mycobacterium bovis (strain ATCC BAA-935 / AF2122/97).